The chain runs to 948 residues: Valine--tRNA ligase (948 aa).

Positions 40–50 (PNVTGSLHMGH) match the 'HIGH' region motif. The short motif at 551–555 (KMSKS) is the 'KMSKS' region element. Lys554 contributes to the ATP binding site. Residues 879–945 (LIDKGAELAR…GKLAEQHARI (67 aa)) adopt a coiled-coil conformation.

This sequence belongs to the class-I aminoacyl-tRNA synthetase family. ValS type 1 subfamily. In terms of assembly, monomer.

It localises to the cytoplasm. The catalysed reaction is tRNA(Val) + L-valine + ATP = L-valyl-tRNA(Val) + AMP + diphosphate. Functionally, catalyzes the attachment of valine to tRNA(Val). As ValRS can inadvertently accommodate and process structurally similar amino acids such as threonine, to avoid such errors, it has a 'posttransfer' editing activity that hydrolyzes mischarged Thr-tRNA(Val) in a tRNA-dependent manner. The polypeptide is Valine--tRNA ligase (Pseudomonas syringae pv. tomato (strain ATCC BAA-871 / DC3000)).